Here is a 408-residue protein sequence, read N- to C-terminus: Protein EcsB (408 aa).

A run of 9 helical transmembrane segments spans residues 30–50, 53–73, 111–131, 134–154, 180–200, 284–304, 308–328, 351–371, and 374–394; these read HLVI…SKWI, IPAH…VLTS, LFPL…VTPG, LVSY…NQVM, LVLY…YVIM, YLGI…YVSA, IAAV…LPLF, YFSL…VASA, and AGLT…FVVL.

Its subcellular location is the cell membrane. Its function is as follows. Presumed to form part of an ABC-transporter, it may form a transport channel. This chain is Protein EcsB (ecsB), found in Bacillus subtilis (strain 168).